Reading from the N-terminus, the 372-residue chain is Glutamate 5-kinase (372 aa).

ATP is bound at residue lysine 14. Substrate contacts are provided by serine 54, aspartate 141, and asparagine 153. Threonine 173–aspartate 174 lines the ATP pocket. Residues arginine 280 to methionine 358 enclose the PUA domain.

This sequence belongs to the glutamate 5-kinase family.

Its subcellular location is the cytoplasm. The catalysed reaction is L-glutamate + ATP = L-glutamyl 5-phosphate + ADP. It functions in the pathway amino-acid biosynthesis; L-proline biosynthesis; L-glutamate 5-semialdehyde from L-glutamate: step 1/2. Catalyzes the transfer of a phosphate group to glutamate to form L-glutamate 5-phosphate. This is Glutamate 5-kinase from Burkholderia lata (strain ATCC 17760 / DSM 23089 / LMG 22485 / NCIMB 9086 / R18194 / 383).